A 520-amino-acid polypeptide reads, in one-letter code: EGF domain-specific O-linked N-acetylglucosamine transferase (520 aa).

Positions 1-16 (MPILPILIGILHLSLA) are cleaved as a signal peptide. N-linked (GlcNAc...) asparagine glycosylation is found at Asn52, Asn176, and Asn250. Residues 292-294 (DVE) carry the Required for optimal activity motif. N-linked (GlcNAc...) asparagine glycosylation occurs at Asn479. The Prevents secretion from ER motif lies at 517-520 (RNEL).

A divalent metal cation is required as a cofactor.

Its subcellular location is the endoplasmic reticulum lumen. It carries out the reaction L-seryl-[protein] + UDP-N-acetyl-alpha-D-glucosamine = 3-O-(N-acetyl-beta-D-glucosaminyl)-L-seryl-[protein] + UDP + H(+). It catalyses the reaction L-threonyl-[protein] + UDP-N-acetyl-alpha-D-glucosamine = 3-O-(N-acetyl-beta-D-glucosaminyl)-L-threonyl-[protein] + UDP + H(+). Its function is as follows. Catalyzes the transfer of a single N-acetylglucosamine from UDP-GlcNAc to a serine or threonine residue in extracellular proteins resulting in their modification with a beta-linked N-acetylglucosamine (O-GlcNAc). Specifically glycosylates the Thr residue located between the fifth and sixth conserved cysteines of folded EGF-like domains. Involved in epithelial cell adhesion/interaction with the extracellular matrix by mediating glycosylation of proteins in the secretory pathway, such as Dumpy (Dp). The chain is EGF domain-specific O-linked N-acetylglucosamine transferase (Eogt) from Drosophila melanogaster (Fruit fly).